The primary structure comprises 351 residues: Nicotinate-nucleotide--dimethylbenzimidazole phosphoribosyltransferase (351 aa).

The active-site Proton acceptor is glutamate 317.

The protein belongs to the CobT family.

The catalysed reaction is 5,6-dimethylbenzimidazole + nicotinate beta-D-ribonucleotide = alpha-ribazole 5'-phosphate + nicotinate + H(+). It participates in nucleoside biosynthesis; alpha-ribazole biosynthesis; alpha-ribazole from 5,6-dimethylbenzimidazole: step 1/2. Catalyzes the synthesis of alpha-ribazole-5'-phosphate from nicotinate mononucleotide (NAMN) and 5,6-dimethylbenzimidazole (DMB). This Pseudomonas putida (strain ATCC 700007 / DSM 6899 / JCM 31910 / BCRC 17059 / LMG 24140 / F1) protein is Nicotinate-nucleotide--dimethylbenzimidazole phosphoribosyltransferase.